Consider the following 398-residue polypeptide: Phosphoglycerate kinase (398 aa).

Residues 21-23 (DFN), Arg-36, 59-62 (HLGR), Arg-119, and Arg-157 contribute to the substrate site. Residues Lys-208, Gly-296, Glu-327, and 354 to 357 (GGDS) each bind ATP.

This sequence belongs to the phosphoglycerate kinase family. As to quaternary structure, monomer.

The protein resides in the cytoplasm. It catalyses the reaction (2R)-3-phosphoglycerate + ATP = (2R)-3-phospho-glyceroyl phosphate + ADP. It functions in the pathway carbohydrate degradation; glycolysis; pyruvate from D-glyceraldehyde 3-phosphate: step 2/5. The chain is Phosphoglycerate kinase (pgk) from Streptococcus pyogenes serotype M1.